Reading from the N-terminus, the 356-residue chain is Phosphate acyltransferase (356 aa).

This sequence belongs to the PlsX family. In terms of assembly, homodimer. Probably interacts with PlsY.

Its subcellular location is the cytoplasm. The enzyme catalyses a fatty acyl-[ACP] + phosphate = an acyl phosphate + holo-[ACP]. Its pathway is lipid metabolism; phospholipid metabolism. Catalyzes the reversible formation of acyl-phosphate (acyl-PO(4)) from acyl-[acyl-carrier-protein] (acyl-ACP). This enzyme utilizes acyl-ACP as fatty acyl donor, but not acyl-CoA. The sequence is that of Phosphate acyltransferase from Escherichia coli (strain K12 / DH10B).